We begin with the raw amino-acid sequence, 150 residues long: Nucleoside diphosphate kinase (150 aa).

Lys-9, Phe-57, Arg-85, Thr-91, Arg-102, and Asn-112 together coordinate ATP. His-115 functions as the Pros-phosphohistidine intermediate in the catalytic mechanism.

This sequence belongs to the NDK family. As to quaternary structure, homotetramer. Mg(2+) serves as cofactor.

The protein resides in the cytoplasm. The catalysed reaction is a 2'-deoxyribonucleoside 5'-diphosphate + ATP = a 2'-deoxyribonucleoside 5'-triphosphate + ADP. The enzyme catalyses a ribonucleoside 5'-diphosphate + ATP = a ribonucleoside 5'-triphosphate + ADP. In terms of biological role, major role in the synthesis of nucleoside triphosphates other than ATP. The ATP gamma phosphate is transferred to the NDP beta phosphate via a ping-pong mechanism, using a phosphorylated active-site intermediate. This Staphylococcus carnosus (strain TM300) protein is Nucleoside diphosphate kinase.